A 437-amino-acid chain; its full sequence is Methylenetetrahydrofolate--tRNA-(uracil-5-)-methyltransferase TrmFO (437 aa).

G10–G15 contacts FAD.

It belongs to the MnmG family. TrmFO subfamily. The cofactor is FAD.

It is found in the cytoplasm. It carries out the reaction uridine(54) in tRNA + (6R)-5,10-methylene-5,6,7,8-tetrahydrofolate + NADH + H(+) = 5-methyluridine(54) in tRNA + (6S)-5,6,7,8-tetrahydrofolate + NAD(+). The enzyme catalyses uridine(54) in tRNA + (6R)-5,10-methylene-5,6,7,8-tetrahydrofolate + NADPH + H(+) = 5-methyluridine(54) in tRNA + (6S)-5,6,7,8-tetrahydrofolate + NADP(+). Catalyzes the folate-dependent formation of 5-methyl-uridine at position 54 (M-5-U54) in all tRNAs. The sequence is that of Methylenetetrahydrofolate--tRNA-(uracil-5-)-methyltransferase TrmFO from Geotalea daltonii (strain DSM 22248 / JCM 15807 / FRC-32) (Geobacter daltonii).